The chain runs to 458 residues: ATP synthase subunit beta (458 aa).

148–155 contacts ATP; that stretch reads GGAGVGKT.

Belongs to the ATPase alpha/beta chains family. In terms of assembly, F-type ATPases have 2 components, CF(1) - the catalytic core - and CF(0) - the membrane proton channel. CF(1) has five subunits: alpha(3), beta(3), gamma(1), delta(1), epsilon(1). CF(0) has three main subunits: a(1), b(2) and c(9-12). The alpha and beta chains form an alternating ring which encloses part of the gamma chain. CF(1) is attached to CF(0) by a central stalk formed by the gamma and epsilon chains, while a peripheral stalk is formed by the delta and b chains.

The protein localises to the cell inner membrane. It catalyses the reaction ATP + H2O + 4 H(+)(in) = ADP + phosphate + 5 H(+)(out). Its function is as follows. Produces ATP from ADP in the presence of a proton gradient across the membrane. The catalytic sites are hosted primarily by the beta subunits. The polypeptide is ATP synthase subunit beta (Nitrosococcus oceani (strain ATCC 19707 / BCRC 17464 / JCM 30415 / NCIMB 11848 / C-107)).